Here is a 96-residue protein sequence, read N- to C-terminus: UPF0235 protein YggU (96 aa).

It belongs to the UPF0235 family.

The sequence is that of UPF0235 protein YggU from Shigella flexneri.